Reading from the N-terminus, the 66-residue chain is Large ribosomal subunit protein bL33c (66 aa).

Belongs to the bacterial ribosomal protein bL33 family.

Its subcellular location is the plastid. The protein localises to the chloroplast. In Eucalyptus globulus subsp. globulus (Tasmanian blue gum), this protein is Large ribosomal subunit protein bL33c.